Reading from the N-terminus, the 240-residue chain is Probable transcriptional regulatory protein Csal_0810 (240 aa).

Belongs to the TACO1 family.

It localises to the cytoplasm. The chain is Probable transcriptional regulatory protein Csal_0810 from Chromohalobacter salexigens (strain ATCC BAA-138 / DSM 3043 / CIP 106854 / NCIMB 13768 / 1H11).